We begin with the raw amino-acid sequence, 163 residues long: Small ribosomal subunit protein bS6 (163 aa).

A disordered region spans residues 97-163 (EEGQTAMLTN…GRNEGEGDRA (67 aa)). Over residues 122 to 163 (RGPRRDFGDRGPRRDFGDRGPRRDGDGPRAEGGRNEGEGDRA) the composition is skewed to basic and acidic residues.

Belongs to the bacterial ribosomal protein bS6 family.

Binds together with bS18 to 16S ribosomal RNA. The chain is Small ribosomal subunit protein bS6 from Rhodospirillum centenum (strain ATCC 51521 / SW).